Here is a 231-residue protein sequence, read N- to C-terminus: Regulatory factor X-associated protein (231 aa).

The interval 1 to 163 (MEAQAVPEGS…GNVKLEESTD (163 aa)) is disordered. A compositionally biased stretch (acidic residues) spans 50–65 (ADAEDEAGDDDADLLD). Residues 115–138 (KQRKPWMCKKHRNKMYKDKYKKKK) are compositionally biased toward basic residues. Positions 123 to 138 (KKHRNKMYKDKYKKKK) match the Nuclear localization signal motif. A Glycyl lysine isopeptide (Lys-Gly) (interchain with G-Cter in SUMO2) cross-link involves residue K157.

As to quaternary structure, RFX consists of at least 3 different subunits; RFXAP, RFX5 and RFX-B/RFXANK; with each subunit representing a separate complementation group. RFX forms cooperative DNA binding complexes with X2BP and CBF/NF-Y. RFX associates with CIITA to form an active transcriptional complex. Post-translationally, phosphorylated.

It is found in the nucleus. In terms of biological role, part of the RFX complex that binds to the X-box of MHC II promoters. This Mus musculus (Mouse) protein is Regulatory factor X-associated protein (Rfxap).